The chain runs to 49 residues: Protein YlcJ (49 aa).

A signal peptide spans 1-21 (MSLVLCFLLMSLFFMYSFVLS).

The chain is Protein YlcJ from Escherichia coli (strain K12).